Consider the following 316-residue polypeptide: Arginine transport system permease protein ArgU (316 aa).

Positions 1-14 are enriched in polar residues; it reads MSDLNQGPGASTAQ. The interval 1-20 is disordered; it reads MSDLNQGPGASTAQPKPIEA. The next 6 helical transmembrane spans lie at 29–49, 74–94, 108–128, 151–171, 217–237, and 251–271; these read WVAA…ALNN, IALT…LAVM, LYLW…WGLL, MFLL…AEIV, LISM…LELY, and VPML…LMVG. An ABC transmembrane type-1 domain is found at 70–274; sequence ALHTIALTLL…TSILMVGQYY (205 aa).

This sequence belongs to the binding-protein-dependent transport system permease family. As to quaternary structure, the complex is probably composed of two ATP-binding proteins (ArgV), two transmembrane proteins (ArgU) and a solute-binding protein (ArgT).

It is found in the cell membrane. Its function is as follows. Part of the ABC transporter complex ArgTUV involved in L-arginine import. May also transport L-citrulline. Probably responsible for the translocation of the substrate across the membrane. The polypeptide is Arginine transport system permease protein ArgU (Corynebacterium glutamicum (strain ATCC 13032 / DSM 20300 / JCM 1318 / BCRC 11384 / CCUG 27702 / LMG 3730 / NBRC 12168 / NCIMB 10025 / NRRL B-2784 / 534)).